The primary structure comprises 326 residues: Aldo-keto reductase family 1 member D1 (326 aa).

NADP(+) contacts are provided by residues 22-26 and aspartate 52; that span reads GLGTY. Tyrosine 26 is a substrate binding site. The substrate site is built by tyrosine 57, tryptophan 88, glutamate 119, and tyrosine 131. The active-site Proton donor is tyrosine 57. Residues 168–169, glutamine 192, and 219–224 contribute to the NADP(+) site; these read SN and YSPLGT. Tryptophan 230 contributes to the substrate binding site. An NADP(+)-binding site is contributed by 273 to 283; that stretch reads KSTTPERIKEN.

The protein belongs to the aldo/keto reductase family. The N-terminus is blocked.

Its subcellular location is the cytoplasm. The enzyme catalyses 5beta-cholestan-3-one + NADP(+) = cholest-4-en-3-one + NADPH + H(+). The catalysed reaction is 4,5beta-dihydrocortisone + NADP(+) = cortisone + NADPH + H(+). It carries out the reaction cortisol + NADPH + H(+) = 5beta-dihydrocortisol + NADP(+). It catalyses the reaction corticosterone + NADPH + H(+) = 5beta-dihydrocorticosterone + NADP(+). The enzyme catalyses 7alpha,12alpha-dihydroxycholest-4-en-3-one + NADPH + H(+) = 7alpha,12alpha-dihydroxy-5beta-cholestan-3-one + NADP(+). The catalysed reaction is 7alpha-hydroxycholest-4-en-3-one + NADPH + H(+) = 7alpha-hydroxy-5beta-cholestan-3-one + NADP(+). It carries out the reaction epitestosterone + NADPH + H(+) = 5beta-dihydroepitestosterone + NADP(+). It catalyses the reaction androst-4-ene-3,17-dione + NADPH + H(+) = 5beta-androstane-3,17-dione + NADP(+). The enzyme catalyses progesterone + NADPH + H(+) = 5beta-pregnan-3,20-dione + NADP(+). The catalysed reaction is 21-hydroxyprogesterone + NADPH + H(+) = 5beta-dihydrodeoxycorticosterone + NADP(+). It carries out the reaction aldosterone + NADPH + H(+) = 5beta-dihydroaldosterone + NADP(+). It catalyses the reaction 17beta-hydroxyandrosta-1,4-dien-3-one + NADPH + H(+) = 17beta-hydroxy-5beta-androst-1-en-3-one + NADP(+). The enzyme catalyses 17beta-hydroxyestr-4-en-3-one + NADPH + H(+) = 17beta-hydroxy-5beta-estran-3-one + NADP(+). The catalysed reaction is 5beta-dihydrotestosterone + NADP(+) = testosterone + NADPH + H(+). It carries out the reaction androst-4-ene-3,11,17-trione + NADPH + H(+) = 17beta-hydroxyandrost-4-ene-3,11-dione + NADP(+). Its activity is regulated as follows. Subject to inhibition by high substrate concentrations. Inhibited by testosterone concentrations above 10 uM. Inhibited by the primary and secondary bile acids chenodeoxycholic acid and ursodeoxycholic acid. Its function is as follows. Catalyzes the stereospecific NADPH-dependent reduction of the C4-C5 double bond of bile acid intermediates and steroid hormones carrying a delta(4)-3-one structure to yield an A/B cis-ring junction. This cis-configuration is crucial for bile acid biosynthesis and plays important roles in steroid metabolism. Capable of reducing a broad range of delta-(4)-3-ketosteroids from C18 (such as, 17beta-hydroxyestr-4-en-3-one) to C27 (such as, 7alpha-hydroxycholest-4-en-3-one). This is Aldo-keto reductase family 1 member D1 (Akr1d1) from Rattus norvegicus (Rat).